Reading from the N-terminus, the 37-residue chain is Large ribosomal subunit protein bL36c (37 aa).

Belongs to the bacterial ribosomal protein bL36 family.

It localises to the plastid. It is found in the chloroplast. In Jasminum nudiflorum (Winter jasmine), this protein is Large ribosomal subunit protein bL36c.